Here is a 345-residue protein sequence, read N- to C-terminus: Phosphoribosylformylglycinamidine cyclo-ligase (345 aa).

The protein belongs to the AIR synthase family.

The protein localises to the cytoplasm. The catalysed reaction is 2-formamido-N(1)-(5-O-phospho-beta-D-ribosyl)acetamidine + ATP = 5-amino-1-(5-phospho-beta-D-ribosyl)imidazole + ADP + phosphate + H(+). The protein operates within purine metabolism; IMP biosynthesis via de novo pathway; 5-amino-1-(5-phospho-D-ribosyl)imidazole from N(2)-formyl-N(1)-(5-phospho-D-ribosyl)glycinamide: step 2/2. The protein is Phosphoribosylformylglycinamidine cyclo-ligase of Chromobacterium violaceum (strain ATCC 12472 / DSM 30191 / JCM 1249 / CCUG 213 / NBRC 12614 / NCIMB 9131 / NCTC 9757 / MK).